Reading from the N-terminus, the 122-residue chain is Large ribosomal subunit protein uL14 (122 aa).

This sequence belongs to the universal ribosomal protein uL14 family. As to quaternary structure, part of the 50S ribosomal subunit. Forms a cluster with proteins L3 and L19. In the 70S ribosome, L14 and L19 interact and together make contacts with the 16S rRNA in bridges B5 and B8.

In terms of biological role, binds to 23S rRNA. Forms part of two intersubunit bridges in the 70S ribosome. This Alteromonas mediterranea (strain DSM 17117 / CIP 110805 / LMG 28347 / Deep ecotype) protein is Large ribosomal subunit protein uL14.